A 536-amino-acid polypeptide reads, in one-letter code: Major facilitator superfamily domain-containing protein 4B (536 aa).

A run of 12 helical transmembrane segments spans residues 19–39, 53–73, 81–101, 105–125, 140–160, 211–231, 297–317, 341–361, 366–386, 391–411, 428–448, and 456–476; these read LTYW…GPTI, ITWV…SGGA, ALLA…IIPL, VLLL…IDTI, IFLQ…PLIA, YAFW…FVLM, FFLI…IMGV, LNCI…PLSY, VHLL…LMIL, VFLF…FPCL, VLVT…GTLI, and FLVC…SVIL.

This sequence belongs to the major facilitator superfamily.

It localises to the membrane. In Danio rerio (Zebrafish), this protein is Major facilitator superfamily domain-containing protein 4B.